A 388-amino-acid polypeptide reads, in one-letter code: Phosphopentomutase (388 aa).

Positions 11, 283, 288, 324, 325, and 336 each coordinate Mn(2+).

It belongs to the phosphopentomutase family. It depends on Mn(2+) as a cofactor.

It localises to the cytoplasm. It carries out the reaction 2-deoxy-alpha-D-ribose 1-phosphate = 2-deoxy-D-ribose 5-phosphate. The enzyme catalyses alpha-D-ribose 1-phosphate = D-ribose 5-phosphate. It functions in the pathway carbohydrate degradation; 2-deoxy-D-ribose 1-phosphate degradation; D-glyceraldehyde 3-phosphate and acetaldehyde from 2-deoxy-alpha-D-ribose 1-phosphate: step 1/2. In terms of biological role, isomerase that catalyzes the conversion of deoxy-ribose 1-phosphate (dRib-1-P) and ribose 1-phosphate (Rib-1-P) to deoxy-ribose 5-phosphate (dRib-5-P) and ribose 5-phosphate (Rib-5-P), respectively. The chain is Phosphopentomutase from Anaeromyxobacter sp. (strain K).